We begin with the raw amino-acid sequence, 26 residues long: uncharacterized protein (26 aa).

This is an uncharacterized protein from Escherichia coli (strain K12).